The chain runs to 126 residues: Small ribosomal subunit protein uS13 (126 aa).

The segment at 94 to 126 (GLPVRGQKTRNNAHTVKGKPKAAIAGKKKNKVN) is disordered. Over residues 109–126 (VKGKPKAAIAGKKKNKVN) the composition is skewed to basic residues.

This sequence belongs to the universal ribosomal protein uS13 family. As to quaternary structure, part of the 30S ribosomal subunit. Forms a loose heterodimer with protein S19. Forms two bridges to the 50S subunit in the 70S ribosome.

Located at the top of the head of the 30S subunit, it contacts several helices of the 16S rRNA. In the 70S ribosome it contacts the 23S rRNA (bridge B1a) and protein L5 of the 50S subunit (bridge B1b), connecting the 2 subunits; these bridges are implicated in subunit movement. Contacts the tRNAs in the A and P-sites. In Aster yellows witches'-broom phytoplasma (strain AYWB), this protein is Small ribosomal subunit protein uS13.